The following is a 513-amino-acid chain: GMP synthase [glutamine-hydrolyzing] (513 aa).

One can recognise a Glutamine amidotransferase type-1 domain in the interval 8–198 (MILVLDFGSQ…VFGVCDCDGK (191 aa)). The active-site Nucleophile is the Cys85. Residues His172 and Glu174 contribute to the active site. The region spanning 199 to 388 (WSMENFIEIE…LGIPDDIVWR (190 aa)) is the GMPS ATP-PPase domain. Residue 226 to 232 (SGGVDSS) coordinates ATP.

Homodimer.

The enzyme catalyses XMP + L-glutamine + ATP + H2O = GMP + L-glutamate + AMP + diphosphate + 2 H(+). The protein operates within purine metabolism; GMP biosynthesis; GMP from XMP (L-Gln route): step 1/1. Its function is as follows. Catalyzes the synthesis of GMP from XMP. This is GMP synthase [glutamine-hydrolyzing] from Bacillus pumilus (strain SAFR-032).